The following is a 178-amino-acid chain: ATP-dependent protease subunit HslV (178 aa).

T7 is an active-site residue. G162, C165, and T168 together coordinate Na(+).

It belongs to the peptidase T1B family. HslV subfamily. In terms of assembly, a double ring-shaped homohexamer of HslV is capped on each side by a ring-shaped HslU homohexamer. The assembly of the HslU/HslV complex is dependent on binding of ATP.

The protein localises to the cytoplasm. The enzyme catalyses ATP-dependent cleavage of peptide bonds with broad specificity.. Allosterically activated by HslU binding. Protease subunit of a proteasome-like degradation complex believed to be a general protein degrading machinery. The protein is ATP-dependent protease subunit HslV of Leptothrix cholodnii (strain ATCC 51168 / LMG 8142 / SP-6) (Leptothrix discophora (strain SP-6)).